The sequence spans 494 residues: Neuronal acetylcholine receptor subunit alpha-6 (494 aa).

Positions 1–25 (MLTSKGQGFLHGGLCLWLCVFTPFF) are cleaved as a signal peptide. The Extracellular portion of the chain corresponds to 26–239 (KGCVGCATEE…ITYSFYIRRL (214 aa)). N-linked (GlcNAc...) asparagine glycans are attached at residues Asn54 and Asn171. Cystine bridges form between Cys158–Cys172 and Cys222–Cys223. 3 consecutive transmembrane segments (helical) span residues 240-264 (PMFY…VFYL), 272-290 (VTLC…LVIT), and 306-327 (YLLF…VLNI). Residues 328 to 465 (HYRTPTTHTM…WKYVAMVVDR (138 aa)) are Cytoplasmic-facing. Ser401 carries the phosphoserine modification. Residues 466–484 (VFLWVFIIVCVFGTAGLFL) traverse the membrane as a helical segment.

This sequence belongs to the ligand-gated ion channel (TC 1.A.9) family. Acetylcholine receptor (TC 1.A.9.1) subfamily. Alpha-6/CHRNA6 sub-subfamily. In terms of assembly, neuronal AChR is composed of two different types of subunits: alpha and non-alpha (beta). CHRNA6/alpha-6 subunit can be combined to CHRNB2/beta-2, CHRNA4/alpha-4 and CHRNB3/beta-3 to give rise to functional receptors. Heteropentamers containing CHRNB3 have an stoichiometry of (CHRNA6:CHRNB2)2:CHRNB3. Interacts with LYPD6.

It is found in the synaptic cell membrane. It carries out the reaction Ca(2+)(in) = Ca(2+)(out). It catalyses the reaction K(+)(in) = K(+)(out). The enzyme catalyses Na(+)(in) = Na(+)(out). With respect to regulation, activated by a myriad of ligands such as acetylcholine, cytisine and nicotine. CHRNA6 nAChR activity is inhibited by the antagonists alpha-conotoxin MII and PIA, a small disulfide-constrained peptides from cone snails. Its function is as follows. Component of neuronal acetylcholine receptors (nAChRs) that function as pentameric, ligand-gated cation channels with high calcium permeability among other activities. nAChRs are excitatory neurotrasnmitter receptors formed by a collection of nAChR subunits known to mediate synaptic transmission in the nervous system and the neuromuscular junction. Each nAchR subunit confers differential attributes to channel properties, including activation, deactivation and desensitization kinetics, pH sensitivity, cation permeability, and binding to allosteric modulators. CHRNA6 forms pentameric channels with CHRNB2, CHRNB3 and CHRNA4 that exhibit high sensitivity to ACh and nicotine and are predominantly expressed in only a few brain areas, including dopaminergic neurons, norepirephrine neurons and cells of the visual system. nAChrs containing CHRNA6 subunits mediate endogenous cholinergic modulation of dopamine and gamma-aminobutyric acid (GABA) release in response to nicotine at nerve terminals. In Pan troglodytes (Chimpanzee), this protein is Neuronal acetylcholine receptor subunit alpha-6 (CHRNA6).